The following is a 150-amino-acid chain: Large ribosomal subunit protein bL9 (150 aa).

This sequence belongs to the bacterial ribosomal protein bL9 family.

Functionally, binds to the 23S rRNA. This Shewanella oneidensis (strain ATCC 700550 / JCM 31522 / CIP 106686 / LMG 19005 / NCIMB 14063 / MR-1) protein is Large ribosomal subunit protein bL9.